A 385-amino-acid polypeptide reads, in one-letter code: Putative non-inhibitory serpin-Z11 (385 aa).

An RCL region spans residues 324–348; the sequence is GTTAVEAMYSPSSPGYSPGYQPPRP.

Belongs to the serpin family.

This is Putative non-inhibitory serpin-Z11 from Oryza sativa subsp. japonica (Rice).